The primary structure comprises 656 residues: DNA mismatch repair protein MutL (656 aa).

A disordered region spans residues 385–427 (DNSDSLTEQNSTDYTVNQPETGSVSEKITDRTVESSNEFTDRT). Positions 387–410 (SDSLTEQNSTDYTVNQPETGSVSE) are enriched in polar residues. Basic and acidic residues predominate over residues 411 to 427 (KITDRTVESSNEFTDRT).

It belongs to the DNA mismatch repair MutL/HexB family.

This protein is involved in the repair of mismatches in DNA. It is required for dam-dependent methyl-directed DNA mismatch repair. May act as a 'molecular matchmaker', a protein that promotes the formation of a stable complex between two or more DNA-binding proteins in an ATP-dependent manner without itself being part of a final effector complex. The protein is DNA mismatch repair protein MutL of Lactococcus lactis subsp. cremoris (strain SK11).